The sequence spans 150 residues: Large ribosomal subunit protein bL9 (150 aa).

It belongs to the bacterial ribosomal protein bL9 family.

Functionally, binds to the 23S rRNA. The polypeptide is Large ribosomal subunit protein bL9 (Lactiplantibacillus plantarum (strain ATCC BAA-793 / NCIMB 8826 / WCFS1) (Lactobacillus plantarum)).